A 623-amino-acid chain; its full sequence is C2H2-type transcription factor zfpA (623 aa).

The span at 202–219 (GLAVSSPMPNSGPHSRSV) shows a compositional bias: polar residues. 2 disordered regions span residues 202–256 (GLAV…EKGR) and 468–493 (SNKA…NGKA). The span at 227-239 (SISSTNSRRSQLS) shows a compositional bias: low complexity. The C2H2-type zinc-finger motif lies at 255–276 (GRCPHPDCGRVFKDLKAHMLTH).

The protein resides in the nucleus. Functionally, transcription factor involved in fungal growth and virulence potential. Negatively regulates antifungal drug susceptibility via transcriptional inhibition of the expressions of drug efflux pumps in a crzA-dependent way. Under the treatment of azoles, both zfpA and crzA transfer to nuclei and coregulate the expression of multidrug transporters and then keep normal drug susceptibility in fungal cells. This chain is C2H2-type transcription factor zfpA, found in Aspergillus fumigatus (strain CBS 144.89 / FGSC A1163 / CEA10) (Neosartorya fumigata).